We begin with the raw amino-acid sequence, 240 residues long: Adenylate dimethylallyltransferase (240 aa).

This sequence belongs to the isopentenyl transferase family.

It carries out the reaction dimethylallyl diphosphate + AMP = N(6)-(dimethylallyl)adenosine 5'-phosphate + diphosphate. In terms of biological role, transfers dimethylallyl groups to AMP as part of the biosynthesis of cytokinin phytohormones. The protein is Adenylate dimethylallyltransferase (izt) of Agrobacterium fabrum (strain C58 / ATCC 33970) (Agrobacterium tumefaciens (strain C58)).